Consider the following 368-residue polypeptide: 3-isopropylmalate dehydrogenase (368 aa).

Residue 79–91 participates in NAD(+) binding; sequence GPEWGTSSTVRPE. Substrate contacts are provided by Arg98, Arg108, Arg137, and Asp226. Positions 226, 251, and 255 each coordinate Mg(2+). 291–303 lines the NAD(+) pocket; it reads GSAPDISGKGIVN.

The protein belongs to the isocitrate and isopropylmalate dehydrogenases family. In terms of assembly, homodimer. Mg(2+) serves as cofactor. The cofactor is Mn(2+).

Its subcellular location is the cytoplasm. It carries out the reaction (2R,3S)-3-isopropylmalate + NAD(+) = 4-methyl-2-oxopentanoate + CO2 + NADH. The protein operates within amino-acid biosynthesis; L-leucine biosynthesis; L-leucine from 3-methyl-2-oxobutanoate: step 3/4. In terms of biological role, catalyzes the oxidation of 3-carboxy-2-hydroxy-4-methylpentanoate (3-isopropylmalate) to 3-carboxy-4-methyl-2-oxopentanoate. The product decarboxylates to 4-methyl-2 oxopentanoate. This is 3-isopropylmalate dehydrogenase (leu-1) from Neurospora crassa (strain ATCC 24698 / 74-OR23-1A / CBS 708.71 / DSM 1257 / FGSC 987).